Here is a 176-residue protein sequence, read N- to C-terminus: Adenine phosphoribosyltransferase (176 aa).

Belongs to the purine/pyrimidine phosphoribosyltransferase family. In terms of assembly, homodimer.

Its subcellular location is the cytoplasm. It carries out the reaction AMP + diphosphate = 5-phospho-alpha-D-ribose 1-diphosphate + adenine. It participates in purine metabolism; AMP biosynthesis via salvage pathway; AMP from adenine: step 1/1. Its function is as follows. Catalyzes a salvage reaction resulting in the formation of AMP, that is energically less costly than de novo synthesis. This Borreliella afzelii (strain PKo) (Borrelia afzelii) protein is Adenine phosphoribosyltransferase.